We begin with the raw amino-acid sequence, 765 residues long: AMP deaminase 3 (765 aa).

A phosphoserine mark is found at Ser-85 and Ser-106. Positions 315 and 317 each coordinate Zn(2+). Residues His-317 and 386 to 391 (KFNSKY) each bind substrate. Residue His-584 coordinates Zn(2+). Glu-587 is a binding site for substrate. Residue His-606 is the Proton acceptor of the active site. Asp-661 provides a ligand contact to Zn(2+). A substrate-binding site is contributed by 662–665 (DPMQ).

This sequence belongs to the metallo-dependent hydrolases superfamily. Adenosine and AMP deaminases family. Homotetramer. It depends on Zn(2+) as a cofactor. In terms of tissue distribution, expressed in adult tissues such as aorta, heart, kidney, lung, muscle and thyroid. Weakly expressed in thyroid and not detected in liver.

The enzyme catalyses AMP + H2O + H(+) = IMP + NH4(+). It functions in the pathway purine metabolism; IMP biosynthesis via salvage pathway; IMP from AMP: step 1/1. Functionally, AMP deaminase plays a critical role in energy metabolism. This is AMP deaminase 3 from Rattus norvegicus (Rat).